Reading from the N-terminus, the 878-residue chain is MSDVFNSPQARTKISAAFGIKPTAGQDVEELLIPKVWVPPEDPLASPSRLAKFLRENGYKILQPRSLPENEEYETDQILPDLAWMRQIEGAVLKPTLSLHWGPRVLPKVLLNSPPEQGKAQCVPTRHCTTQADIYLFLQVPEATESLKDEVTLLTQNIRDKAYGSGTYMGQATRLVAMKEVATGRNPNKDPLKLGYTFESIAQLLDITLPVGPPGEDDKPWVPLTRVPSRMLVLTGDVDGDFEVEDYLPKINLKSSSGLPYVGRTKGETIGEMIAISNQFLRELSALLKQGAGTKGSNKKKLLSMLSDYWYLSCGLLFPKAERYDKSTWLTKTRNIWSAPSPTHLMISMITWPVMSNSPNNVLNIEGCPSLYKFNPFRGGLNRIVEWILAPEEPKALVYADNIYIVHSNTWYSIDLEKGEANCTRQHMQAAMYYILTRGWSDNGDPMFNQTWASFAMNIAPALVVDSSCLIMNLQIKSYGQGSGNAATFINNHLLSTLVLDQWNLMKQPNPDSEEFKSIEDKLGINFKIERSIDDIRGKLRQLVPLAQPGYLSGGVEPEQSSPTVELDLLGWSATYSKDLGIYVPVLDKERLFCSAAYPKGVENKSLKSKVGIEQAYKVVRYEALRLVGGWNYPLLNKACKNNASAARRHLEAKGFPLDEFLAEWSELSEFGETFEGFNIKLTVTRENLAELNKPVPPKPPNVNRPVNTGGLKAVSNALKTGRYRNEAGLSGLVLLATARSRLQDAVKAKAEAEKLHKSKPDDPDADWFERSETLSDLLEKADVASKVAHSALVETSDALEAVQSSSVYTPKYPEVKNPQTASNPVVGLHLPAKRATGVQAALLGAGTSRPMGMEAPTRSKNAVKMAKRAQRQKESRQ.

258–265 (GLPYVGRT) lines the GTP pocket. Positions 397–597 (LVYADNIYIV…DKERLFCSAA (201 aa)) constitute a RdRp catalytic domain. The tract at residues 845 to 878 (GAGTSRPMGMEAPTRSKNAVKMAKRAQRQKESRQ) is disordered.

Interacts with VP3 in the cytoplasm. Post-translationally, may exist in multiple phosphorylated forms.

It is found in the virion. The enzyme catalyses RNA(n) + a ribonucleoside 5'-triphosphate = RNA(n+1) + diphosphate. RNA-dependent RNA polymerase which is found both free and covalently attached to the genomic RNA. May also contain guanylyl and methyl transferase activities. The chain is RNA-directed RNA polymerase (VP1) from Gallus gallus (Chicken).